Consider the following 352-residue polypeptide: Protein MGF 360-16R (352 aa).

This sequence belongs to the asfivirus MGF 360 family.

Its function is as follows. Plays a role in virus cell tropism, and may be required for efficient virus replication in macrophages. The polypeptide is Protein MGF 360-16R (Ornithodoros (relapsing fever ticks)).